The chain runs to 526 residues: Protein spinster homolog 1 (526 aa).

Positions 1-43 (MTSRSSQGDAAPFLTQADNTEEEGAPDPGGHSSDEEEEEGKDH) are disordered. 12 helical membrane-spanning segments follow: residues 48–68 (HLLTGISYRHSVTIVIILFYI), 98–118 (GLVQTVFICSYMFLAPVFGYL), 126–146 (LIMCIGISFWSLVTLLSSFVS), 159–179 (LVGVGEASYSTIAPTIIADLF), 187–207 (MLSFFYFATPVGCGLGYIAGS), 218–238 (WALRVTPGLGLVAVLLLIFVA), 272–292 (FILSTFGFTTVAFVTGALALW), 321–341 (MIFGGITCVTGVLGVLTGVEI), 355–375 (LVCAVGMISSAPFLYLSLAFA), 385–405 (FIFIGETLLSLNWALVADILL), 419–439 (LQIVVSHLLGDAGSPYLIGVI), and 463–483 (MICAFVGVIGGGFFLATALFI).

The protein belongs to the major facilitator superfamily. Spinster (TC 2.A.1.49) family.

It localises to the lysosome membrane. The enzyme catalyses a 1-acyl-sn-glycero-3-phosphocholine(out) + H(+)(out) = a 1-acyl-sn-glycero-3-phosphocholine(in) + H(+)(in). The catalysed reaction is a 1-acyl-sn-glycero-3-phosphoethanolamine(out) + H(+)(out) = a 1-acyl-sn-glycero-3-phosphoethanolamine(in) + H(+)(in). It carries out the reaction a 1-O-(1Z-alkenyl)-sn-glycero-3-phosphocholine(out) + H(+)(out) = a 1-O-(1Z-alkenyl)-sn-glycero-3-phosphocholine(in) + H(+)(in). It catalyses the reaction a 1-O-(1Z-alkenyl)-sn-glycero-3-phosphoethanolamine(out) + H(+)(out) = a 1-O-(1Z-alkenyl)-sn-glycero-3-phosphoethanolamine(in) + H(+)(in). Functionally, mediates the rate-limiting, proton-dependent, lysosomal efflux of lysophospholipids. Selective for zwitterionic headgroups such as lysophosphatidylcholine (LPC) and lysophosphatidylethanolamine (LPE). Essential player in lysosomal homeostasis. In Xenopus tropicalis (Western clawed frog), this protein is Protein spinster homolog 1 (spns1).